Reading from the N-terminus, the 1031-residue chain is MMGKKSRAVPGRRPILQLSPPGPRSSTPGRDPDPDPDPEADSTAAATSQSAPAAATAAAATSPAVPASAAPEDSPSEDEQEVVVEVPNVVQNPPTPVMTTRPTAVKATGGLCLLGAYADSDDDESDVSEKTAQSKEANGNQATDIDSTLANFLAEIDAITAPQPAAPVVASAPPPTPPRPEPKEAATPALSPTASNGSDTAQTPGWHYDTQCSLAGVEIEMGDWQEVWDENTGCYYYWNTQTNEVTWELPQYLATQVQGLQHYQPSSVTGTEAAFVVNTDMYTKERTTAASSSKSGPVITKREVKKEVNEGIQALSNSEEERKGVAAALLAPLLPEGVKEEEERWRRKVICKEADPVSETKETSTASEETGPSIKPPEVMMDGTEDPSQEELCSVVQSGESEEEEEEEEQDTLELELALERKKAELRALEEGDGSVSGSSPRSDISQPASQDGVRRIMSKRGKWKMFVRATSPESTSRSSSKTGRDSPENGETAIGAEDSEKIDEISDKETEVEESSEKIKVQLAPKVEEEQDLKFQIGELANTLTSKFEFLGINRQSISNFHMLLLQTETRIADWREGALNGNYLKRKLQDAAEQLKQYEINATPKGWSCHWDRDHRRYFYVNEQSGESQWEFPDGEEEEESQTKEVRDESLPKLTVKDKTCTDPNSTESSENPTGSLCKESFSGQVSSSLMPLTPFWTLLQSNVPVLQPPLPLEMPPPPPPPPESPPPPPPPPPPPPPLEDGEIQEVEMEDEGSEEPPAPGTEEDTPLKPSTQTTAVTSQSLVDSTASSPPSNKAVKRKAPEMSTSVVQRSATIGSSPVLYSQSAIAAGHQAVGMAHQAVGMAHQAVSASHAAAAGVGHQARGMSLQSNYLGLAAAPALMSYAECSVPIGVTTPSLQPAQARGTMAAPAVVEPPPPPPPPPTPTPPPPPPAPKVPPPEKTRKGKKDKAKKSKTKMPSLVKKWQSIQRELDEEDNSSSSEEDRESTAQKRIEEWKQQQLVSGLAERNANFEALPEDWRARLKRRKMAPST.

Disordered regions lie at residues 1 to 102, 116 to 143, and 166 to 205; these read MMGK…TTRP, AYAD…NQAT, and APVV…QTPG. Position 19 is a phosphoserine (S19). 2 stretches are compositionally biased toward low complexity: residues 41-73 and 83-92; these read DSTA…APED and VVEVPNVVQN. S120, S125, and S128 each carry phosphoserine. Polar residues predominate over residues 134–143; it reads SKEANGNQAT. T176 bears the Phosphothreonine mark. Over residues 190–203 the composition is skewed to polar residues; it reads LSPTASNGSDTAQT. A WW 1 domain is found at 218-252; the sequence is EIEMGDWQEVWDENTGCYYYWNTQTNEVTWELPQY. At K294 the chain carries N6-acetyllysine. K305 is covalently cross-linked (Glycyl lysine isopeptide (Lys-Gly) (interchain with G-Cter in SUMO1)). Residue K339 forms a Glycyl lysine isopeptide (Lys-Gly) (interchain with G-Cter in SUMO2) linkage. A Glycyl lysine isopeptide (Lys-Gly) (interchain with G-Cter in SUMO1); alternate cross-link involves residue K352. A Glycyl lysine isopeptide (Lys-Gly) (interchain with G-Cter in SUMO2); alternate cross-link involves residue K352. A disordered region spans residues 355–518; it reads DPVSETKETS…KETEVEESSE (164 aa). A compositionally biased stretch (acidic residues) spans 400 to 414; that stretch reads ESEEEEEEEEQDTLE. Residues 418 to 430 are compositionally biased toward basic and acidic residues; that stretch reads ALERKKAELRALE. A phosphoserine mark is found at S435, S440, S443, S446, and S450. The span at 436 to 450 shows a compositional bias: polar residues; the sequence is VSGSSPRSDISQPAS. A compositionally biased stretch (basic residues) spans 457–466; sequence IMSKRGKWKM. Positions 469–482 are enriched in low complexity; sequence RATSPESTSRSSSK. Phosphoserine is present on residues S472, S507, and S516. Basic and acidic residues predominate over residues 499–518; that stretch reads DSEKIDEISDKETEVEESSE. A Glycyl lysine isopeptide (Lys-Gly) (interchain with G-Cter in SUMO1); alternate cross-link involves residue K527. K527 is covalently cross-linked (Glycyl lysine isopeptide (Lys-Gly) (interchain with G-Cter in SUMO2); alternate). The region spanning 603 to 637 is the WW 2 domain; it reads NATPKGWSCHWDRDHRRYFYVNEQSGESQWEFPDG. Disordered stretches follow at residues 629–681, 712–813, and 900–994; these read ESQW…SLCK, PLPL…VQRS, and PAQA…RIEE. The span at 643 to 663 shows a compositional bias: basic and acidic residues; it reads SQTKEVRDESLPKLTVKDKTC. Polar residues predominate over residues 664-677; the sequence is TDPNSTESSENPTG. Pro residues predominate over residues 712–741; it reads PLPLEMPPPPPPPPESPPPPPPPPPPPPPL. Residues 742-757 show a composition bias toward acidic residues; that stretch reads EDGEIQEVEMEDEGSE. Positions 771-794 are enriched in polar residues; that stretch reads KPSTQTTAVTSQSLVDSTASSPPS. Residues 913-939 are compositionally biased toward pro residues; sequence VEPPPPPPPPPTPTPPPPPPAPKVPPP. The segment covering 943–955 has biased composition (basic residues); sequence RKGKKDKAKKSKT. A compositionally biased stretch (acidic residues) spans 971–984; the sequence is LDEEDNSSSSEEDR. Phosphoserine occurs at positions 977, 978, and 979. Over residues 985 to 994 the composition is skewed to basic and acidic residues; that stretch reads ESTAQKRIEE.

In terms of assembly, binds FMN1. Interacts with the Arg/Gly-rich-flanked Pro-rich regions of KHDRBS1/SAM68. Arginine methylation in these regions has no effect on this binding. As to expression, ubiquitous. Highest levels in spleen and thymus.

The protein is Formin-binding protein 4 (Fnbp4) of Mus musculus (Mouse).